The following is a 703-amino-acid chain: uncharacterized protein (703 aa).

An N-terminal signal peptide occupies residues 1-23 (MKQIMIFLTSFMLLAMTGQTALA). The helical transmembrane segment at 673 to 693 (MYIGVLALIMVVAAVFIWIAV) threads the bilayer.

Its subcellular location is the cell membrane. This is an uncharacterized protein from Bacillus subtilis (strain 168).